We begin with the raw amino-acid sequence, 184 residues long: MKNITDSFVSVGYWSSAGSFGFNTDILATNPINLSVVLGVLIFFGKGVLSDLLDNRKQRILSTIRNSEELRGGAIEQLEKARARLRKVEMEADEFRVNGYSEIERERVNLINATYENLERLEIYKNETIHFEQQRAINQVRQRVFQQALQGALGTLNSCLNSELHLRTISANIGMFGAMKEITD.

Residues 27 to 49 form a helical membrane-spanning segment; that stretch reads LATNPINLSVVLGVLIFFGKGVL.

It belongs to the ATPase B chain family. In terms of assembly, F-type ATPases have 2 components, F(1) - the catalytic core - and F(0) - the membrane proton channel. F(1) has five subunits: alpha(3), beta(3), gamma(1), delta(1), epsilon(1). F(0) has four main subunits: a(1), b(1), b'(1) and c(10-14). The alpha and beta chains form an alternating ring which encloses part of the gamma chain. F(1) is attached to F(0) by a central stalk formed by the gamma and epsilon chains, while a peripheral stalk is formed by the delta, b and b' chains.

It is found in the plastid. Its subcellular location is the chloroplast thylakoid membrane. F(1)F(0) ATP synthase produces ATP from ADP in the presence of a proton or sodium gradient. F-type ATPases consist of two structural domains, F(1) containing the extramembraneous catalytic core and F(0) containing the membrane proton channel, linked together by a central stalk and a peripheral stalk. During catalysis, ATP synthesis in the catalytic domain of F(1) is coupled via a rotary mechanism of the central stalk subunits to proton translocation. Functionally, component of the F(0) channel, it forms part of the peripheral stalk, linking F(1) to F(0). This chain is ATP synthase subunit b, chloroplastic, found in Chloranthus spicatus (Chulantree).